Reading from the N-terminus, the 101-residue chain is Apolipoprotein C-II (101 aa).

Positions 1-22 (MGIRYLLVLVLVLLVLGCEVQG) are cleaved as a signal peptide. The tract at residues 66 to 74 (TVDEKIREI) is lipid binding. Positions 78-101 (STAAVSTYAGIFTDQLLSMLKGDQ) are lipoprotein lipase cofactor.

The protein belongs to the apolipoprotein C2 family. Post-translationally, proapolipoprotein C-II is synthesized as a sialic acid containing glycoprotein which is subsequently desialylated prior to its proteolytic processing. Proapolipoprotein C-II, the major form found in plasma undergoes proteolytic cleavage of its N-terminal hexapeptide to generate apolipoprotein C-II, which occurs as the minor form in plasma.

It localises to the secreted. Component of chylomicrons, very low-density lipoproteins (VLDL), low-density lipoproteins (LDL), and high-density lipoproteins (HDL) in plasma. Plays an important role in lipoprotein metabolism as an activator of lipoprotein lipase. Both proapolipoprotein C-II and apolipoprotein C-II can activate lipoprotein lipase. This Mirounga angustirostris (Northern elephant seal) protein is Apolipoprotein C-II (APOC2).